The sequence spans 353 residues: UPF0283 membrane protein YcjF (353 aa).

Helical transmembrane passes span 70 to 90, 100 to 120, and 213 to 233; these read MVMGGLALFGASVVGQGVQWT, VALGGCAAGALIIGAGVGSVV, and ESTLMIAVSPLALVDMAFIAW.

It belongs to the UPF0283 family.

The protein localises to the cell inner membrane. The chain is UPF0283 membrane protein YcjF from Escherichia coli O127:H6 (strain E2348/69 / EPEC).